The chain runs to 35 residues: Photosystem II reaction center protein M (35 aa).

Residues 7–27 (GFIATILFVLVPTVFLLILYI) traverse the membrane as a helical segment.

Belongs to the PsbM family. In terms of assembly, PSII is composed of 1 copy each of membrane proteins PsbA, PsbB, PsbC, PsbD, PsbE, PsbF, PsbH, PsbI, PsbJ, PsbK, PsbL, PsbM, PsbT, PsbX, PsbY, PsbZ, Psb30/Ycf12, peripheral proteins PsbO, CyanoQ (PsbQ), PsbU, PsbV and a large number of cofactors. It forms dimeric complexes.

It is found in the cellular thylakoid membrane. One of the components of the core complex of photosystem II (PSII). PSII is a light-driven water:plastoquinone oxidoreductase that uses light energy to abstract electrons from H(2)O, generating O(2) and a proton gradient subsequently used for ATP formation. It consists of a core antenna complex that captures photons, and an electron transfer chain that converts photonic excitation into a charge separation. This subunit is found at the monomer-monomer interface. The sequence is that of Photosystem II reaction center protein M from Gloeothece citriformis (strain PCC 7424) (Cyanothece sp. (strain PCC 7424)).